The primary structure comprises 109 residues: Large ribosomal subunit protein uL22 (109 aa).

The protein belongs to the universal ribosomal protein uL22 family. In terms of assembly, part of the 50S ribosomal subunit.

In terms of biological role, this protein binds specifically to 23S rRNA; its binding is stimulated by other ribosomal proteins, e.g. L4, L17, and L20. It is important during the early stages of 50S assembly. It makes multiple contacts with different domains of the 23S rRNA in the assembled 50S subunit and ribosome. Functionally, the globular domain of the protein is located near the polypeptide exit tunnel on the outside of the subunit, while an extended beta-hairpin is found that lines the wall of the exit tunnel in the center of the 70S ribosome. The chain is Large ribosomal subunit protein uL22 from Methylibium petroleiphilum (strain ATCC BAA-1232 / LMG 22953 / PM1).